The chain runs to 448 residues: Trigger factor (448 aa).

One can recognise a PPIase FKBP-type domain in the interval 173–258 (SDRVTIDFVG…LKQIEWAHMP (86 aa)).

The protein belongs to the FKBP-type PPIase family. Tig subfamily.

It is found in the cytoplasm. It carries out the reaction [protein]-peptidylproline (omega=180) = [protein]-peptidylproline (omega=0). In terms of biological role, involved in protein export. Acts as a chaperone by maintaining the newly synthesized protein in an open conformation. Functions as a peptidyl-prolyl cis-trans isomerase. This is Trigger factor from Herminiimonas arsenicoxydans.